The primary structure comprises 348 residues: Probable WRKY transcription factor 27 (348 aa).

4 disordered regions span residues 19-52 (VSTTNSCAGHEDDIGNCKQQQDPPPPPLFQASSS), 67-90 (TTTTTTTWSPPPLLPPPKASSPSP), 133-153 (LLQQQSQPPLRSRKRKNQQKR), and 218-320 (GEHT…LIPN). Positions 75 to 85 (SPPPLLPPPKA) are enriched in pro residues. Low complexity predominate over residues 133–142 (LLQQQSQPPL). Basic residues predominate over residues 143–153 (RSRKRKNQQKR). Residues 159 to 225 (TQENLSSDLW…YTGEHTHPRP (67 aa)) constitute a DNA-binding region (WRKY). A compositionally biased stretch (polar residues) spans 228–242 (RNSLAGSTRNKSQPV). Positions 274–315 (DVQETNGDEDMVGQEVNMEEEEEEEEVEEDDEEEEDDDDVDD) are enriched in acidic residues.

Belongs to the WRKY group II-e family.

The protein resides in the nucleus. Its function is as follows. Transcription factor. Interacts specifically with the W box (5'-(T)TGAC[CT]-3'), a frequently occurring elicitor-responsive cis-acting element. The chain is Probable WRKY transcription factor 27 (WRKY27) from Arabidopsis thaliana (Mouse-ear cress).